Consider the following 71-residue polypeptide: Sec-independent protein translocase protein TatA (71 aa).

The chain crosses the membrane as a helical span at residues 1 to 21 (MGSFSMGHWLIVLAIIVLLFG). Residues 41–57 (KEMEDETPVEKIEKADS) show a composition bias toward basic and acidic residues. A disordered region spans residues 41 to 71 (KEMEDETPVEKIEKADSETQSTKQNETTKNV). Over residues 58 to 71 (ETQSTKQNETTKNV) the composition is skewed to polar residues.

The protein belongs to the TatA/E family. The Tat system comprises two distinct complexes: a TatABC complex, containing multiple copies of TatA, TatB and TatC subunits, and a separate TatA complex, containing only TatA subunits. Substrates initially bind to the TatABC complex, which probably triggers association of the separate TatA complex to form the active translocon.

The protein localises to the cell inner membrane. Part of the twin-arginine translocation (Tat) system that transports large folded proteins containing a characteristic twin-arginine motif in their signal peptide across membranes. TatA could form the protein-conducting channel of the Tat system. This Campylobacter fetus subsp. fetus (strain 82-40) protein is Sec-independent protein translocase protein TatA.